Reading from the N-terminus, the 304-residue chain is Uricase (304 aa).

Alanine 2 carries the post-translational modification N-acetylalanine. Lysine 10 and lysine 23 each carry N6-acetyllysine; alternate. Residues lysine 10 and lysine 23 each carry the N6-succinyllysine; alternate modification. The active-site Charge relay system is the lysine 23. N6-acetyllysine occurs at positions 27 and 36. Residues serine 39 and serine 63 each carry the phosphoserine modification. Catalysis depends on threonine 68, which acts as the Charge relay system. Urate contacts are provided by threonine 68 and aspartate 69. Lysine 118, lysine 122, and lysine 164 each carry N6-acetyllysine. Phenylalanine 170 provides a ligand contact to urate. 2 positions are modified to N6-acetyllysine: lysine 175 and lysine 185. Arginine 187 contacts urate. Residues lysine 221 and lysine 228 each carry the N6-acetyllysine; alternate modification. An N6-succinyllysine; alternate mark is found at lysine 221 and lysine 228. The residue at position 232 (serine 232) is a Phosphoserine. The urate site is built by valine 235, glutamine 236, and asparagine 262. Histidine 264 (charge relay system) is an active-site residue. Lysine 278 bears the N6-acetyllysine mark. At tyrosine 289 the chain carries Phosphotyrosine. Positions 302–304 match the Microbody targeting signal motif; that stretch reads SRL.

It belongs to the uricase family. In terms of assembly, homotetramer.

It localises to the peroxisome. It carries out the reaction urate + O2 + H2O = 5-hydroxyisourate + H2O2. It participates in purine metabolism; urate degradation; (S)-allantoin from urate: step 1/3. Catalyzes the oxidation of uric acid to 5-hydroxyisourate, which is further processed to form (S)-allantoin. This Sus scrofa (Pig) protein is Uricase (UOX).